We begin with the raw amino-acid sequence, 266 residues long: MPKGKKAKGKKVAPAPAVVKKQEAKKVVNPLFEKRPKNFGIGQDIQPKRDLTRFVKWPRYIRLQRQRAILYKRLKVPPAINQFTQALDRQTATQLLKLAHKYRPETKQEKKQRLLARAEKKAAGKGDVPTKRPPVLRAGVNTVTTLVENKKAQLVVIAHDVDPIELVVFLPALCRKMGVPYCIIKGKARLGHLVHRKTCTTVAFTQVNSEDKGALAKLVEAIRTNYNDRYDEIRRHWGGNVLGPKSVARIAKLEKAKAKELATKLG.

Glycyl lysine isopeptide (Lys-Gly) (interchain with G-Cter in SUMO2) cross-links involve residues Lys-11, Lys-20, and Lys-21. N6-acetyllysine is present on Lys-34. Lys-48 is covalently cross-linked (Glycyl lysine isopeptide (Lys-Gly) (interchain with G-Cter in SUMO2)). Lys-97 carries the N6-acetyllysine; alternate modification. Residue Lys-97 forms a Glycyl lysine isopeptide (Lys-Gly) (interchain with G-Cter in SUMO2); alternate linkage. Residue Lys-125 forms a Glycyl lysine isopeptide (Lys-Gly) (interchain with G-Cter in SUMO2) linkage. Lys-217 is subject to N6-acetyllysine. Residue Lys-245 forms a Glycyl lysine isopeptide (Lys-Gly) (interchain with G-Cter in SUMO2) linkage.

The protein belongs to the eukaryotic ribosomal protein eL8 family. As to quaternary structure, component of the large ribosomal subunit. Interacts with CRY1. Interacts with DICER1, AGO2, TARBP2, MOV10 and EIF6; they form a large RNA-induced silencing complex (RISC).

The protein localises to the cytoplasm. In terms of biological role, component of the large ribosomal subunit. The ribosome is a large ribonucleoprotein complex responsible for the synthesis of proteins in the cell. The protein is Large ribosomal subunit protein eL8 (Rpl7a) of Mus musculus (Mouse).